The chain runs to 284 residues: Proteasome subunit beta 1 (284 aa).

A propeptide spans 1-56 (removed in mature form; by autocatalysis); it reads MASHDSYTGRLPGAFMNPGTSSFTEFLASYNPDLLPGRHMTALAGGMPGNVEAPHA. T57 (nucleophile) is an active-site residue.

The protein belongs to the peptidase T1B family. In terms of assembly, the 20S proteasome core is composed of 14 alpha and 14 beta subunits that assemble into four stacked heptameric rings, resulting in a barrel-shaped structure. The two inner rings, each composed of seven catalytic beta subunits, are sandwiched by two outer rings, each composed of seven alpha subunits. The catalytic chamber with the active sites is on the inside of the barrel. Has a gated structure, the ends of the cylinder being occluded by the N-termini of the alpha-subunits. Is capped by the proteasome-associated ATPase, ARC.

It is found in the cytoplasm. It carries out the reaction Cleavage of peptide bonds with very broad specificity.. It participates in protein degradation; proteasomal Pup-dependent pathway. The formation of the proteasomal ATPase ARC-20S proteasome complex, likely via the docking of the C-termini of ARC into the intersubunit pockets in the alpha-rings, may trigger opening of the gate for substrate entry. Interconversion between the open-gate and close-gate conformations leads to a dynamic regulation of the 20S proteasome proteolysis activity. Functionally, component of the proteasome core, a large protease complex with broad specificity involved in protein degradation. This is Proteasome subunit beta 1 from Thermomonospora curvata (strain ATCC 19995 / DSM 43183 / JCM 3096 / KCTC 9072 / NBRC 15933 / NCIMB 10081 / Henssen B9).